The primary structure comprises 431 residues: 23S rRNA (uracil(1939)-C(5))-methyltransferase RlmD (431 aa).

Positions 8–68 (KRRVTTRQII…SKYSRGQVKR (61 aa)) constitute a TRAM domain. [4Fe-4S] cluster contacts are provided by Cys-81, Cys-87, Cys-90, and Cys-162. S-adenosyl-L-methionine contacts are provided by Gln-265, Phe-294, Asn-299, Glu-315, Asn-342, and Asp-363. Cys-389 serves as the catalytic Nucleophile.

It belongs to the class I-like SAM-binding methyltransferase superfamily. RNA M5U methyltransferase family. RlmD subfamily.

It catalyses the reaction uridine(1939) in 23S rRNA + S-adenosyl-L-methionine = 5-methyluridine(1939) in 23S rRNA + S-adenosyl-L-homocysteine + H(+). Functionally, catalyzes the formation of 5-methyl-uridine at position 1939 (m5U1939) in 23S rRNA. This chain is 23S rRNA (uracil(1939)-C(5))-methyltransferase RlmD, found in Enterobacter sp. (strain 638).